A 20-amino-acid chain; its full sequence is Phenol-soluble modulin alpha 4 peptide (20 aa).

Belongs to the phenol-soluble modulin alpha peptides family.

Functionally, peptide which can recruit, activate and subsequently lyse neutrophils, thus eliminating the main cellular defense against infection. The polypeptide is Phenol-soluble modulin alpha 4 peptide (psmA4) (Staphylococcus aureus (strain bovine RF122 / ET3-1)).